The following is a 615-amino-acid chain: Threonine--tRNA ligase (615 aa).

Positions 1 to 132 (MRILQLHCDR…PLAEGFKVIT (132 aa)) are editing domain. Residues 196 to 495 (PHVALMKRMG…SARGTKPELP (300 aa)) form a catalytic region. Residues Cys-288, His-340, and His-464 each contribute to the Zn(2+) site.

The protein belongs to the class-II aminoacyl-tRNA synthetase family. As to quaternary structure, homodimer. Zn(2+) serves as cofactor.

It localises to the cytoplasm. It carries out the reaction tRNA(Thr) + L-threonine + ATP = L-threonyl-tRNA(Thr) + AMP + diphosphate + H(+). In terms of biological role, catalyzes the attachment of threonine to tRNA(Thr) in a two-step reaction: L-threonine is first activated by ATP to form Thr-AMP and then transferred to the acceptor end of tRNA(Thr). Also edits incorrectly charged L-seryl-tRNA(Thr). The polypeptide is Threonine--tRNA ligase (thrS) (Cenarchaeum symbiosum (strain A)).